The chain runs to 156 residues: Small ribosomal subunit protein uS7 (156 aa).

Belongs to the universal ribosomal protein uS7 family. In terms of assembly, part of the 30S ribosomal subunit. Contacts proteins S9 and S11.

Functionally, one of the primary rRNA binding proteins, it binds directly to 16S rRNA where it nucleates assembly of the head domain of the 30S subunit. Is located at the subunit interface close to the decoding center, probably blocks exit of the E-site tRNA. The polypeptide is Small ribosomal subunit protein uS7 (Deinococcus deserti (strain DSM 17065 / CIP 109153 / LMG 22923 / VCD115)).